The primary structure comprises 419 residues: Putative zinc metalloprotease SPs1691 (419 aa).

His-18 lines the Zn(2+) pocket. Glu-19 is an active-site residue. His-22 contributes to the Zn(2+) binding site. The next 4 membrane-spanning stretches (helical) occupy residues Leu-169–Val-191, Leu-301–Asn-323, Leu-343–Ile-365, and Ala-392–Trp-411. Positions Gly-175–Lys-274 constitute a PDZ domain.

It belongs to the peptidase M50B family. It depends on Zn(2+) as a cofactor.

The protein resides in the cell membrane. This chain is Putative zinc metalloprotease SPs1691 (eep), found in Streptococcus pyogenes serotype M3 (strain SSI-1).